A 330-amino-acid polypeptide reads, in one-letter code: Ketol-acid reductoisomerase (NADP(+)) (330 aa).

Positions 1 to 181 (MNAYYEQDAD…GGTKAGVIET (181 aa)) constitute a KARI N-terminal Rossmann domain. NADP(+)-binding positions include 24-27 (FGSQ), arginine 47, serine 50, serine 52, and 82-85 (DQYQ). Residue histidine 107 is part of the active site. Position 133 (glycine 133) interacts with NADP(+). Residues 182 to 327 (TFKNETETDL…AKLRDMMSWL (146 aa)) enclose the KARI C-terminal knotted domain. Mg(2+) contacts are provided by aspartate 190, glutamate 194, glutamate 226, and glutamate 230. Serine 251 lines the substrate pocket.

Belongs to the ketol-acid reductoisomerase family. It depends on Mg(2+) as a cofactor.

It catalyses the reaction (2R)-2,3-dihydroxy-3-methylbutanoate + NADP(+) = (2S)-2-acetolactate + NADPH + H(+). The catalysed reaction is (2R,3R)-2,3-dihydroxy-3-methylpentanoate + NADP(+) = (S)-2-ethyl-2-hydroxy-3-oxobutanoate + NADPH + H(+). The protein operates within amino-acid biosynthesis; L-isoleucine biosynthesis; L-isoleucine from 2-oxobutanoate: step 2/4. Its pathway is amino-acid biosynthesis; L-valine biosynthesis; L-valine from pyruvate: step 2/4. Its function is as follows. Involved in the biosynthesis of branched-chain amino acids (BCAA). Catalyzes an alkyl-migration followed by a ketol-acid reduction of (S)-2-acetolactate (S2AL) to yield (R)-2,3-dihydroxy-isovalerate. In the isomerase reaction, S2AL is rearranged via a Mg-dependent methyl migration to produce 3-hydroxy-3-methyl-2-ketobutyrate (HMKB). In the reductase reaction, this 2-ketoacid undergoes a metal-dependent reduction by NADPH to yield (R)-2,3-dihydroxy-isovalerate. The chain is Ketol-acid reductoisomerase (NADP(+)) from Chlorobium phaeobacteroides (strain BS1).